The following is a 553-amino-acid chain: uncharacterized protein (553 aa).

Residues 1–31 (MEDIMTSLLVATSRVVVTISLAYVPVKSAFA) form the signal peptide. The active-site Acyl-ester intermediate is the S207. A disulfide bridge links C275 with C292. Residues D276, D279, V281, D283, and L285 each contribute to the Ca(2+) site. Catalysis depends on charge relay system residues D444 and H482. A disulfide bridge connects residues C528 and C550.

The protein belongs to the tannase family.

This is an uncharacterized protein from Agrobacterium fabrum (strain C58 / ATCC 33970) (Agrobacterium tumefaciens (strain C58)).